The following is a 335-amino-acid chain: Ribosomal RNA large subunit methyltransferase F (335 aa).

The protein belongs to the methyltransferase superfamily. METTL16/RlmF family.

Its subcellular location is the cytoplasm. The catalysed reaction is adenosine(1618) in 23S rRNA + S-adenosyl-L-methionine = N(6)-methyladenosine(1618) in 23S rRNA + S-adenosyl-L-homocysteine + H(+). Its function is as follows. Specifically methylates the adenine in position 1618 of 23S rRNA. The polypeptide is Ribosomal RNA large subunit methyltransferase F (Yersinia enterocolitica serotype O:8 / biotype 1B (strain NCTC 13174 / 8081)).